The primary structure comprises 385 residues: tRNA-specific 2-thiouridylase MnmA (385 aa).

Residues 29–36 and Leu55 contribute to the ATP site; that span reads GLSGGVDS. Cys116 acts as the Nucleophile in catalysis. A disulfide bridge connects residues Cys116 and Cys225. Gly141 is a binding site for ATP. The interaction with tRNA stretch occupies residues 175-177; sequence KDQ. The active-site Cysteine persulfide intermediate is the Cys225. Positions 330–331 are interaction with tRNA; that stretch reads RY.

Belongs to the MnmA/TRMU family.

The protein localises to the cytoplasm. It carries out the reaction S-sulfanyl-L-cysteinyl-[protein] + uridine(34) in tRNA + AH2 + ATP = 2-thiouridine(34) in tRNA + L-cysteinyl-[protein] + A + AMP + diphosphate + H(+). Its function is as follows. Catalyzes the 2-thiolation of uridine at the wobble position (U34) of tRNA, leading to the formation of s(2)U34. This chain is tRNA-specific 2-thiouridylase MnmA, found in Prochlorococcus marinus (strain MIT 9301).